A 241-amino-acid chain; its full sequence is Phosphoribosylformylglycinamidine synthase subunit PurQ (241 aa).

Residues 6 to 241 enclose the Glutamine amidotransferase type-1 domain; it reads NVGIVVFPGS…QSLLLASAFA (236 aa). Residue Cys-90 is the Nucleophile of the active site. Catalysis depends on residues His-207 and Glu-209.

In terms of assembly, part of the FGAM synthase complex composed of 1 PurL, 1 PurQ and 2 PurS subunits.

The protein localises to the cytoplasm. The enzyme catalyses N(2)-formyl-N(1)-(5-phospho-beta-D-ribosyl)glycinamide + L-glutamine + ATP + H2O = 2-formamido-N(1)-(5-O-phospho-beta-D-ribosyl)acetamidine + L-glutamate + ADP + phosphate + H(+). The catalysed reaction is L-glutamine + H2O = L-glutamate + NH4(+). The protein operates within purine metabolism; IMP biosynthesis via de novo pathway; 5-amino-1-(5-phospho-D-ribosyl)imidazole from N(2)-formyl-N(1)-(5-phospho-D-ribosyl)glycinamide: step 1/2. Functionally, part of the phosphoribosylformylglycinamidine synthase complex involved in the purines biosynthetic pathway. Catalyzes the ATP-dependent conversion of formylglycinamide ribonucleotide (FGAR) and glutamine to yield formylglycinamidine ribonucleotide (FGAM) and glutamate. The FGAM synthase complex is composed of three subunits. PurQ produces an ammonia molecule by converting glutamine to glutamate. PurL transfers the ammonia molecule to FGAR to form FGAM in an ATP-dependent manner. PurS interacts with PurQ and PurL and is thought to assist in the transfer of the ammonia molecule from PurQ to PurL. The chain is Phosphoribosylformylglycinamidine synthase subunit PurQ from Thermosynechococcus vestitus (strain NIES-2133 / IAM M-273 / BP-1).